A 477-amino-acid chain; its full sequence is Acylamidase (477 aa).

Catalysis depends on charge relay system residues Lys-82 and Ser-157. Ser-181 acts as the Acyl-ester intermediate in catalysis.

Belongs to the amidase family.

It catalyses the reaction a monocarboxylic acid amide + H2O = a monocarboxylate + NH4(+). It carries out the reaction an anilide + H2O = aniline + a carboxylate + H(+). The enzyme catalyses an N-acyl-L-amino acid + H2O = an L-alpha-amino acid + a carboxylate. The catalysed reaction is an N-acetyl-L-cysteine-S-conjugate + H2O = an S-substituted L-cysteine + acetate. Amidase activity is completely suppressed by inhibitors of serine proteases (phenylmethylsulfonyl fluoride and diisopropyl fluorophosphate), partially inhibited by copper and mercury ions, but is not affected by inhibitors of aliphatic amidases (acetaldehyde and nitrophenyl disulfides) or by EDTA. In terms of biological role, amidase with broad substrate specificity, catalyzing the hydrolysis of a wide range of N-substituted amides, and, to a lesser extent, the hydrolysis of non-substituted amides. Acid para-nitroanilides (4'-nitroacetanilide, Gly-pNA, Ala-pNA, Leu-pNA) are the best substrates for this enzyme. N-substituted acrylamides (isopropyl acrylamide, N,N-dimethyl-aminopropyl acrylamide, and methylene-bis-acrylamide), N-acetyl derivatives of glycine, alanine and leucine, and aliphatic amides (acetamide, acrylamide, isobutyramide, n-butyramide, and valeramide) can also be used as substrates but with less efficiency. This Rhodococcus erythropolis (Arthrobacter picolinophilus) protein is Acylamidase.